A 382-amino-acid polypeptide reads, in one-letter code: MSDKYYRSAYMNVDLNAVASNFKVFSTLHPNKTVMAVVKANAYGLGSVKVARHLMENGATFFAVATLDEAIELRMHGITAKILVLGVLPAKDIDKAIQHRVALTVPSKQWLKEAIKNISGEQEKKLWLHIKLDTGMGRLGIKDTNTYQEVIEIIQQYEQLVFEGVFTHFACADEPGDMTTEQYQRFKDMVNEAIKPEYIHCQNSAGSLLMDCQFCNAIRPGISLYGYYPSEYVQQKVKVHLKPSVQLIANVVQTKTLQAGESVSYGATYTATDPTTIALLPIGYADGYLRIMQGSFVNVNGHQCEVIGRVCMDQTIVKVPDQVKAGDSVILIDNHRESPQSVEVVAEKQHTINYEVLCNLSRRLPRIYHDGDQRFVTNELLK.

The Proton acceptor; specific for D-alanine role is filled by Lys-39. Position 39 is an N6-(pyridoxal phosphate)lysine (Lys-39). Residue Arg-138 participates in substrate binding. Residue Tyr-265 is the Proton acceptor; specific for L-alanine of the active site. Met-312 is a substrate binding site.

This sequence belongs to the alanine racemase family. The cofactor is pyridoxal 5'-phosphate.

The catalysed reaction is L-alanine = D-alanine. The protein operates within amino-acid biosynthesis; D-alanine biosynthesis; D-alanine from L-alanine: step 1/1. In terms of biological role, catalyzes the interconversion of L-alanine and D-alanine. May also act on other amino acids. This is Alanine racemase 1 (alr1) from Staphylococcus aureus (strain N315).